The chain runs to 114 residues: Vacuolar ATPase assembly integral membrane protein VMA21 (114 aa).

Residues M1–S39 lie on the Cytoplasmic side of the membrane. Residues V40–F60 traverse the membrane as a helical segment. Topologically, residues A61–Y73 are lumenal. The chain crosses the membrane as a helical span at residues A74–M94. Residues A95–R114 lie on the Cytoplasmic side of the membrane. The short motif at K111–R114 is the Prevents secretion from ER element.

It belongs to the VMA21 family.

The protein resides in the endoplasmic reticulum membrane. The protein localises to the endoplasmic reticulum-Golgi intermediate compartment membrane. It localises to the cytoplasmic vesicle. Its subcellular location is the COPII-coated vesicle membrane. Its function is as follows. Required for the assembly of the V0 complex of the vacuolar ATPase (V-ATPase) in the endoplasmic reticulum. The sequence is that of Vacuolar ATPase assembly integral membrane protein VMA21 from Chaetomium globosum (strain ATCC 6205 / CBS 148.51 / DSM 1962 / NBRC 6347 / NRRL 1970) (Soil fungus).